A 447-amino-acid polypeptide reads, in one-letter code: MSTVTTPSAPKVGFVSLGCPKALVDSERILTQLRMEGYEVVATYEDADVVVVNTCGFIDTAKAESLEVIGEAIKENGKVIVTGCMGVDANVIRDVHPSVLSVTGPQQYEQVVNAVHDVVPPRKDHNPLIDLVPPQGVKLTPRHYAYLKISEGCNHSCSFCIIPSMRGKLVSRPVGDVLDEAKRLVKSGVKELLVISQDTSAYGVDVKYRTGFWDGQPVKTRMTELCQALGSMGVWVRLHYVYPYPHVDELIPLMAAGKILPYLDIPFQHASPKILKLMKRPAFEDKTLARIKNWREQCPDLIIRSTFIVGFPGETEEDFQYLLDWLTEAQLDRVGCFQYSPVEGAPANLLDAAIVPDDVKQDRWDRFMAHQQAISAARLQMKIGKEIEVLIDEVDDRGAVGRCFFDAPEIDGNVFIGLEEGSTVQPGDKIMCRVTDADEYDLWAEML.

In terms of domain architecture, MTTase N-terminal spans 10–120; the sequence is PKVGFVSLGC…VVNAVHDVVP (111 aa). Residues cysteine 19, cysteine 55, cysteine 84, cysteine 153, cysteine 157, and cysteine 160 each coordinate [4Fe-4S] cluster. The 239-residue stretch at 139-377 folds into the Radical SAM core domain; that stretch reads LTPRHYAYLK…MAHQQAISAA (239 aa). One can recognise a TRAM domain in the interval 380-447; the sequence is QMKIGKEIEV…DEYDLWAEML (68 aa).

The protein belongs to the methylthiotransferase family. RimO subfamily. It depends on [4Fe-4S] cluster as a cofactor.

The protein resides in the cytoplasm. It catalyses the reaction L-aspartate(89)-[ribosomal protein uS12]-hydrogen + (sulfur carrier)-SH + AH2 + 2 S-adenosyl-L-methionine = 3-methylsulfanyl-L-aspartate(89)-[ribosomal protein uS12]-hydrogen + (sulfur carrier)-H + 5'-deoxyadenosine + L-methionine + A + S-adenosyl-L-homocysteine + 2 H(+). Catalyzes the methylthiolation of an aspartic acid residue of ribosomal protein uS12. The polypeptide is Ribosomal protein uS12 methylthiotransferase RimO (Pseudomonas savastanoi pv. phaseolicola (strain 1448A / Race 6) (Pseudomonas syringae pv. phaseolicola (strain 1448A / Race 6))).